A 338-amino-acid polypeptide reads, in one-letter code: Aspartate-semialdehyde dehydrogenase (338 aa).

NADP(+) is bound by residues 13-16 (TGAV) and 41-42 (RS). Arg-101 contributes to the phosphate binding site. Cys-130 serves as the catalytic Acyl-thioester intermediate. Gln-157 serves as a coordination point for substrate. 160–161 (SG) is a binding site for NADP(+). Residue Lys-214 participates in phosphate binding. Residue Arg-236 participates in substrate binding. His-243 functions as the Proton acceptor in the catalytic mechanism. NADP(+) is bound at residue Gln-316.

It belongs to the aspartate-semialdehyde dehydrogenase family. As to quaternary structure, homodimer.

It carries out the reaction L-aspartate 4-semialdehyde + phosphate + NADP(+) = 4-phospho-L-aspartate + NADPH + H(+). It functions in the pathway amino-acid biosynthesis; L-lysine biosynthesis via DAP pathway; (S)-tetrahydrodipicolinate from L-aspartate: step 2/4. Its pathway is amino-acid biosynthesis; L-methionine biosynthesis via de novo pathway; L-homoserine from L-aspartate: step 2/3. It participates in amino-acid biosynthesis; L-threonine biosynthesis; L-threonine from L-aspartate: step 2/5. Catalyzes the NADPH-dependent formation of L-aspartate-semialdehyde (L-ASA) by the reductive dephosphorylation of L-aspartyl-4-phosphate. The protein is Aspartate-semialdehyde dehydrogenase (asd) of Synechocystis sp. (strain ATCC 27184 / PCC 6803 / Kazusa).